A 533-amino-acid polypeptide reads, in one-letter code: Nuclear receptor corepressor 1 (533 aa).

The segment covering 1-17 has biased composition (basic and acidic residues); it reads KDKGPPPKSRYEEELRT. Residues 1-21 are disordered; that stretch reads KDKGPPPKSRYEEELRTRGKT. Residues 29–33 carry the CORNR box 1 motif; sequence IDVII. Residues 37 to 144 are disordered; that stretch reads IASDKDARER…EGMGQVPRTH (108 aa). Residues 38-47 are compositionally biased toward basic and acidic residues; sequence ASDKDARERG. Residues 48–59 are compositionally biased toward low complexity; the sequence is SQSSDSSSSLSS. Ser-73 and Ser-77 each carry phosphoserine. Positions 130–209 are ID1; it reads PSSQAEGMGQ…QSQTVLHPRP (80 aa). Residues 145 to 148 are required for interaction with RARA in the absence of its ligand; the sequence is RLIT. A CORNR box 2 motif is present at residues 153–157; it reads ICQII. The segment covering 165–180 has biased composition (low complexity); sequence QVPSQPSTSTFQTSPS. The interval 165–254 is disordered; sequence QVPSQPSTST…SPPQGPAVHE (90 aa). A compositionally biased stretch (polar residues) spans 181–204; that stretch reads ALSSTPVRTKPSSRYSPESQSQTV. Phosphoserine is present on residues Ser-196, Ser-214, Ser-230, Ser-245, and Ser-278. Basic and acidic residues predominate over residues 218–236; it reads LVDKSRGSRPGKSPERSHI. Residues 306–367 form an ID2 region; sequence IFRKLNSSGG…EDIIRKALMG (62 aa). Residues 357–361 carry the CORNR box 3 motif; sequence LEDII. Over residues 382 to 399 the composition is skewed to low complexity; sequence HPVGVVPGSASTSVVTSS. The disordered stretch occupies residues 382 to 476; it reads HPVGVVPGSA…RPSSTGSTQF (95 aa). Thr-492 bears the Phosphothreonine mark. 2 positions are modified to phosphoserine: Ser-529 and Ser-531.

This sequence belongs to the N-CoR nuclear receptor corepressors family. As to quaternary structure, forms a large corepressor complex that contains SIN3A/B and histone deacetylases HDAC1 and HDAC2. This complex associates with the thyroid receptor (TR) and the retinoid acid receptor (RAR) in the absence of ligand. Interacts directly with RARA; the interaction is facilitated with RARA trimethylation. Component of the N-Cor repressor complex, at least composed of CBFA2T3, HEXIM1, NCOR1, NCOR2, HDAC3, TBL1X, TBL1XR1, CORO2A and GPS2. Interacts with ZBTB33; the interaction serves to recruit the N-CoR complex to promoter regions containing methylated CpG dinucleotides. Interacts with TRIM28 and KDM3A. Interacts (via the RD1 domain) with BAZ1A (via its N-terminal); the interaction corepresses a number of NCOR1-regulated genes. Interacts with BCL6, C1D, DACH1, HEXIM1, HDAC7, RORA, RORC, SAP30, SIAH2, SIN3A and SIN3B. May interact with DEAF1. Interacts with RXRA. Interacts with SETD5. Interacts with VDR. Interacts with ZBTB7A. Interacts with AR. Interacts with HDAC3. In terms of processing, ubiquitinated; mediated by SIAH2 and leading to its subsequent proteasomal degradation.

It localises to the nucleus. In terms of biological role, mediates transcriptional repression by certain nuclear receptors. Part of a complex which promotes histone deacetylation and the formation of repressive chromatin structures which may impede the access of basal transcription factors. Participates in the transcriptional repressor activity produced by BCL6. Recruited by ZBTB7A to the androgen response elements/ARE on target genes, negatively regulates androgen receptor signaling and androgen-induced cell proliferation. Mediates the NR1D1-dependent repression and circadian regulation of TSHB expression. The NCOR1-HDAC3 complex regulates the circadian expression of the core clock gene ARTNL/BMAL1 and the genes involved in lipid metabolism in the liver. The chain is Nuclear receptor corepressor 1 (Ncor1) from Rattus norvegicus (Rat).